The following is a 306-amino-acid chain: Putative HPr kinase/phosphorylase 2 (306 aa).

Catalysis depends on residues His138 and Lys159. 153 to 160 serves as a coordination point for ATP; it reads GESGVGKS. Residue Ser160 participates in Mg(2+) binding. The active-site Proton acceptor; for phosphorylation activity. Proton donor; for dephosphorylation activity is the Asp177. The interval 201–210 is important for the catalytic mechanism of both phosphorylation and dephosphorylation; it reads LALRSVGLLN. Residues 264–269 form an important for the catalytic mechanism of dephosphorylation region; sequence QLQPGR.

It belongs to the HPrK/P family. As to quaternary structure, homohexamer. Mg(2+) is required as a cofactor.

It carries out the reaction [HPr protein]-L-serine + ATP = [HPr protein]-O-phospho-L-serine + ADP + H(+). The catalysed reaction is [HPr protein]-O-phospho-L-serine + phosphate + H(+) = [HPr protein]-L-serine + diphosphate. Its function is as follows. Catalyzes the ATP- as well as the pyrophosphate-dependent phosphorylation of a specific serine residue in HPr, a phosphocarrier protein of the phosphoenolpyruvate-dependent sugar phosphotransferase system (PTS). HprK/P also catalyzes the pyrophosphate-producing, inorganic phosphate-dependent dephosphorylation (phosphorolysis) of seryl-phosphorylated HPr (P-Ser-HPr). The two antagonistic activities of HprK/P are regulated by several intracellular metabolites, which change their concentration in response to the absence or presence of rapidly metabolisable carbon sources (glucose, fructose, etc.) in the growth medium. Also phosphorylates/dephosphorylates the HPr-like catabolite repression protein crh on a specific serine residue. Therefore, by controlling the phosphorylation state of HPr and crh, HPrK/P is a sensor enzyme that plays a major role in the regulation of carbon metabolism and sugar transport: it mediates carbon catabolite repression (CCR), and regulates PTS-catalyzed carbohydrate uptake and inducer exclusion. This Oceanobacillus iheyensis (strain DSM 14371 / CIP 107618 / JCM 11309 / KCTC 3954 / HTE831) protein is Putative HPr kinase/phosphorylase 2 (hprK2).